Here is a 407-residue protein sequence, read N- to C-terminus: MVNEYKKILLLKGFELMDDYHFTSIKSLLAYDLGLTTKMQEEYNRIKITDLMEKKFQGVACLDKLIELAKDMPSLKNLVNNLRKEKSKVAKKIKTQEKAPVKKINQEEVGLAAPAPTARNKLTSEARGRIPVAQKRKTPNKEKTEAKRNKVSQEQSKPPGPSGASTSAAVDHPPLPQTSSSTPSNTSFTPNQETQAQRQVDARRNVPQNDPVTVVVLKATAPFKYESPENGKSTMFHATVASKTQYFHVKVFDINLKEKFVRKKVITISDYSECKGVMEIKEASSVSDFNQNFEVPNRIIEIANKTPKISQLYKQASGTMVYGLFMLQKKSVHKKNTIYEIQDNTGSMDVVGSGKWHNIKCEKGDKLRLFCLQLRTVDRKLKLVCGSHSFIKVIKAKKNKEGPMNVN.

A Pyrin domain is found at 1-88 (MVNEYKKILL…VNNLRKEKSK (88 aa)). Residues 108 to 207 (EVGLAAPAPT…RQVDARRNVP (100 aa)) form a disordered region. Positions 131–137 (PVAQKRK) match the Nuclear localization signal motif. Positions 139 to 148 (PNKEKTEAKR) are enriched in basic and acidic residues. The span at 177 to 190 (QTSSSTPSNTSFTP) shows a compositional bias: low complexity. The HIN-200 domain maps to 196–394 (AQRQVDARRN…CGSHSFIKVI (199 aa)).

In terms of assembly, participates in a ternary complex with YY1 and the YY1 target DNA element. Binds nucleolin and nucleophosmin/NPM/B23. Expressed constitutively in cells of the myeloid lineage. Found in promyelocyte stage cells as well as in all other stage cells including peripheral blood monocytes and granulocytes. Also appears in myeloblast cells in some cases of acute myeloid Leukemia.

The protein localises to the nucleus. It is found in the cytoplasm. Functionally, may act as a transcriptional activator/repressor in the myeloid lineage. Plays a role in the granulocyte/monocyte cell-specific response to interferon. Stimulates the DNA binding of the transcriptional repressor protein YY1. This chain is Myeloid cell nuclear differentiation antigen (MNDA), found in Homo sapiens (Human).